A 351-amino-acid chain; its full sequence is Basic salivary proline-rich protein 3 (351 aa).

A signal peptide spans methionine 1 to alanine 16. At glutamine 17 the chain carries Pyrrolidone carboxylic acid. Residues glutamine 17 to glutamine 351 are disordered. Residues asparagine 20–valine 31 are compositionally biased toward polar residues. Serine 24 bears the Phosphoserine mark. Repeat copies occupy residues proline 53–proline 73, arginine 74–proline 94, arginine 95–proline 115, arginine 116–proline 136, arginine 137–proline 157, arginine 158–proline 178, histidine 179–proline 199, arginine 200–proline 220, arginine 221–proline 241, arginine 242–proline 261, arginine 263–proline 283, and histidine 284–proline 304. The interval proline 53–proline 304 is 12 X 21 AA tandem repeats of [RHP]-P-G-K-P-[EQ]-G-[PQS]-P-[PS]-Q-[GE]-G-N-[QK]-[SP]-[QR]-[GR]-P-P-P. The N-linked (GlcNAc...) asparagine glycan is linked to asparagine 66. Pro residues predominate over residues glycine 70 to glutamine 84. Residue asparagine 87 is glycosylated (N-linked (GlcNAc...) asparagine). A glycan (O-linked (Hex) serine) is linked at serine 89. Positions proline 99–glutamine 111 are enriched in low complexity. An N-linked (GlcNAc...) asparagine glycan is attached at asparagine 108. Over residues glycine 112 to glutamine 126 the composition is skewed to pro residues. Asparagine 129 carries N-linked (GlcNAc...) asparagine glycosylation. The segment covering glycine 133–glutamine 147 has biased composition (pro residues). The N-linked (GlcNAc...) asparagine glycan is linked to asparagine 150. 2 stretches are compositionally biased toward pro residues: residues glycine 154–glutamine 168 and glycine 175–glutamine 189. Asparagine 192 carries N-linked (GlcNAc...) asparagine glycosylation. Residues glycine 196 to glutamine 210 are compositionally biased toward pro residues. Asparagine 213 and asparagine 234 each carry an N-linked (GlcNAc...) asparagine glycan. 3 stretches are compositionally biased toward pro residues: residues glycine 217–glutamine 252, glycine 259–proline 270, and glutamine 279–glutamine 351. The N-linked (Hex) asparagine; atypical glycan is linked to asparagine 297.

N- and O-glycosylated; contains about 50% carbohydrate. This is composed of highly fucosylated N-linked saccharides, the major structure is a biantennary asialosaccharide containing 2 fucose residues on one antenna and an unsubstituted terminal lactosamine sequence on the other. The Gram-negative bacterium F.nucleatum binds to carbohydrates containing unsubstituted GalBeta1,4GlcNAc residues. N-glycosylation on Asn-87 is prevalent in head and neck cancer patients. Post-translationally, proteolytically cleaved at the tripeptide Xaa-Pro-Gln, where Xaa in the P(3) position is mostly lysine. The endoprotease may be of microbial origin. Besides on the N-terminal of mature PRB3, pyroglutamate formation found on at least Gln-67, Gln-88, Gln-256 and Gln-337.

The protein localises to the secreted. In terms of biological role, acts as a receptor for the Gram-negative bacterium F.nucleatum. The chain is Basic salivary proline-rich protein 3 (PRB3) from Homo sapiens (Human).